Consider the following 183-residue polypeptide: Triggering receptor expressed on myeloid cells 3 (183 aa).

The N-terminal stretch at 1–19 (MSPLLLWLGLMLCVSGLQA) is a signal peptide. Topologically, residues 20–138 (GDEEEHKCFL…AWCQGKPVMV (119 aa)) are extracellular. The 99-residue stretch at 30 to 128 (EGENLTLTCP…VIILRQRIRL (99 aa)) folds into the Ig-like V-type domain. N-linked (GlcNAc...) asparagine glycosylation is present at Asn33. A disulfide bond links Cys38 and Cys110. Residues 139–159 (IVLTCGFILNKGLVFSVLFVF) form a helical membrane-spanning segment. Residues 160–183 (LCKAGPKVLQPSKTSKVQGVSEKQ) lie on the Cytoplasmic side of the membrane.

Interacts with TYROBP/DAP12. In terms of tissue distribution, expressed in macrophages and in T-cells.

It localises to the cell membrane. Its function is as follows. Forms a receptor signaling complex with TYROBP/DAP12 which mediates activation of macrophages as part of the innate immune response. This chain is Triggering receptor expressed on myeloid cells 3, found in Mus musculus (Mouse).